Consider the following 88-residue polypeptide: Small ribosomal subunit protein uS15c (88 aa).

It belongs to the universal ribosomal protein uS15 family. As to quaternary structure, part of the 30S ribosomal subunit.

Its subcellular location is the plastid. It is found in the chloroplast. This chain is Small ribosomal subunit protein uS15c (rps15), found in Calycanthus floridus var. glaucus (Eastern sweetshrub).